The sequence spans 364 residues: Methylthioribose-1-phosphate isomerase (364 aa).

Asp-254 acts as the Proton donor in catalysis.

This sequence belongs to the eIF-2B alpha/beta/delta subunits family. MtnA subfamily.

The protein resides in the cytoplasm. Its subcellular location is the nucleus. It catalyses the reaction 5-(methylsulfanyl)-alpha-D-ribose 1-phosphate = 5-(methylsulfanyl)-D-ribulose 1-phosphate. It functions in the pathway amino-acid biosynthesis; L-methionine biosynthesis via salvage pathway; L-methionine from S-methyl-5-thio-alpha-D-ribose 1-phosphate: step 1/6. In terms of biological role, catalyzes the interconversion of methylthioribose-1-phosphate (MTR-1-P) into methylthioribulose-1-phosphate (MTRu-1-P). This Drosophila ananassae (Fruit fly) protein is Methylthioribose-1-phosphate isomerase.